A 489-amino-acid chain; its full sequence is Glycogen synthase (489 aa).

Lys-18 contributes to the ADP-alpha-D-glucose binding site.

This sequence belongs to the glycosyltransferase 1 family. Bacterial/plant glycogen synthase subfamily.

The catalysed reaction is [(1-&gt;4)-alpha-D-glucosyl](n) + ADP-alpha-D-glucose = [(1-&gt;4)-alpha-D-glucosyl](n+1) + ADP + H(+). The protein operates within glycan biosynthesis; glycogen biosynthesis. Synthesizes alpha-1,4-glucan chains using ADP-glucose. The chain is Glycogen synthase from Rhodopseudomonas palustris (strain BisA53).